The following is a 426-amino-acid chain: Enolase (426 aa).

Q163 is a binding site for (2R)-2-phosphoglycerate. Residue E205 is the Proton donor of the active site. Mg(2+) contacts are provided by D242, E283, and D310. Residues K335, R364, S365, and K386 each coordinate (2R)-2-phosphoglycerate. K335 (proton acceptor) is an active-site residue.

This sequence belongs to the enolase family. Requires Mg(2+) as cofactor.

Its subcellular location is the cytoplasm. The protein resides in the secreted. The protein localises to the cell surface. It catalyses the reaction (2R)-2-phosphoglycerate = phosphoenolpyruvate + H2O. The protein operates within carbohydrate degradation; glycolysis; pyruvate from D-glyceraldehyde 3-phosphate: step 4/5. Catalyzes the reversible conversion of 2-phosphoglycerate (2-PG) into phosphoenolpyruvate (PEP). It is essential for the degradation of carbohydrates via glycolysis. The protein is Enolase of Clavibacter michiganensis subsp. michiganensis (strain NCPPB 382).